The chain runs to 277 residues: Phosphate import ATP-binding protein PstB (277 aa).

An ABC transporter domain is found at 31–272; that stretch reads IEVPGLSLFY…PAKKQTEDYI (242 aa). Position 63-70 (63-70) interacts with ATP; sequence GPSGCGKS.

The protein belongs to the ABC transporter superfamily. Phosphate importer (TC 3.A.1.7) family. The complex is composed of two ATP-binding proteins (PstB), two transmembrane proteins (PstC and PstA) and a solute-binding protein (PstS).

The protein localises to the cell inner membrane. It catalyses the reaction phosphate(out) + ATP + H2O = ADP + 2 phosphate(in) + H(+). Part of the ABC transporter complex PstSACB involved in phosphate import. Responsible for energy coupling to the transport system. This is Phosphate import ATP-binding protein PstB from Pseudomonas fluorescens (strain Pf0-1).